The chain runs to 497 residues: MPPSTDSSRRNSEEGSSDGFKLDSSALNKPPEEVFDIVGKLGEGSYGSVHKAIHRESGHVLAIKKVPVDTDLQEIIKEISIMQQCKSKYVVKYYGSYFKHSDLWIVMEYCGAGSISDIMRARRKPLSEQEISAVLRDTLKGLQYLHDLKKIHRDIKAGNILLNTDGIAKLADFGVAGQLTDTMAKRNTVIGTPFWMAPEVIEEIGYDTKADIWSLGITAIEMAEGRPPYSDIHPMRAIFMIPTKPPPTFKKPEEWSSEFNDFIRSCLIKKPEERKTALRLCEHTFIKNAPGCDIMQLMIQDAQEKAILGQAPMAASSGNDATLLSEGMSTMIDGGESTLVQHKDNYVTAQSLRSQMESLRIGGEIPKSAYIPGSSKNGNSPRVQPPGHTASASDPSKNQPFAQDGTGPNFQLGTSESSYKDASYNMMNTEAEYENRFQRAVVDGDFEFLRNITLDELIRRKESLDSEMEEEIRELQRRYKTKRQPILDVIEIKKRLQ.

The disordered stretch occupies residues 1–27 (MPPSTDSSRRNSEEGSSDGFKLDSSAL). The 252-residue stretch at 35 to 286 (FDIVGKLGEG…ALRLCEHTFI (252 aa)) folds into the Protein kinase domain. ATP-binding positions include 41–49 (LGEGSYGSV) and lysine 64. Aspartate 154 serves as the catalytic Proton acceptor. The tract at residues 367-416 (KSAYIPGSSKNGNSPRVQPPGHTASASDPSKNQPFAQDGTGPNFQLGTSE) is disordered. The segment covering 390–416 (ASASDPSKNQPFAQDGTGPNFQLGTSE) has biased composition (polar residues). The SARAH domain maps to 446 to 493 (FEFLRNITLDELIRRKESLDSEMEEEIRELQRRYKTKRQPILDVIEIK). A coiled-coil region spans residues 450–486 (RNITLDELIRRKESLDSEMEEEIRELQRRYKTKRQPI).

This sequence belongs to the protein kinase superfamily. STE Ser/Thr protein kinase family. STE20 subfamily. In terms of assembly, interacts with rsf-1 (via SARAH domain); the interaction is required for the phosphorylation of cst-1. Mg(2+) serves as cofactor. Proteolytically cleaved by caspase-3 during apoptosis which results in kinase activation. In terms of processing, phosphorylated. In terms of tissue distribution, widely expressed in epidermal cells.

It catalyses the reaction L-seryl-[protein] + ATP = O-phospho-L-seryl-[protein] + ADP + H(+). The enzyme catalyses L-threonyl-[protein] + ATP = O-phospho-L-threonyl-[protein] + ADP + H(+). In terms of biological role, serine/threonine-protein kinase which extends lifespan and delays tissue aging, probably by activating daf-16. The polypeptide is Serine/threonine-protein kinase cst-1 (Caenorhabditis elegans).